The sequence spans 778 residues: Endonuclease MutS2 (778 aa).

328–335 (GPNTGGKT) contacts ATP. The Smr domain occupies 702–777 (LDLRGKRYEE…GSGATIVTFK (76 aa)).

Belongs to the DNA mismatch repair MutS family. MutS2 subfamily. In terms of assembly, homodimer. Binds to stalled ribosomes, contacting rRNA.

Its function is as follows. Endonuclease that is involved in the suppression of homologous recombination and thus may have a key role in the control of bacterial genetic diversity. Acts as a ribosome collision sensor, splitting the ribosome into its 2 subunits. Detects stalled/collided 70S ribosomes which it binds and splits by an ATP-hydrolysis driven conformational change. Acts upstream of the ribosome quality control system (RQC), a ribosome-associated complex that mediates the extraction of incompletely synthesized nascent chains from stalled ribosomes and their subsequent degradation. Probably generates substrates for RQC. This chain is Endonuclease MutS2, found in Streptococcus pneumoniae (strain JJA).